The primary structure comprises 1365 residues: Nuclear pore complex protein Nup154 (1365 aa).

Positions 1–508 (MTLPQAQLDF…GTHIIEVLKM (508 aa)) are required for binding to Nup93-1 and anchoring to the nuclear pore complex. The tract at residues 508–986 (MVDVLRQILL…KSINPLKGTA (479 aa)) is required for binding to chromatin.

This sequence belongs to the non-repetitive/WGA-negative nucleoporin family. In terms of assembly, interacts (via N-terminus) with Nup93-1. Interacts with Nup35. Interacts with cup.

It is found in the nucleus. The protein localises to the nuclear pore complex. The protein resides in the chromosome. Its subcellular location is the nucleus membrane. It localises to the cytoplasm. Its function is as follows. Component of the nuclear pore complex. Has a role in the organization of the inner nuclear membrane proteins at the nuclear envelope. In germ cells, plays a role in the nuclear localization of components of the dpp signaling pathways, such as Medea and phosphorylated Mad. Binds to chromatin, and together with Nup62 and Nup93-1, contributes to karyosome morphology and chromatin organization including attachment to the nuclear envelope in oocytes and nurse cells. Has a role in female fertility including egg chamber development; in nurse cells, has a role in the organization of F-actin in subcortical and cytoplasmic actin filaments important for the transfer of cytoplasm from nurse cells to the growing oocytes. Has a role in male spermatogenesis and fertility. Has a role in germ line cell proliferation. The protein is Nuclear pore complex protein Nup154 of Drosophila melanogaster (Fruit fly).